A 381-amino-acid polypeptide reads, in one-letter code: Flap endonuclease 1 (381 aa).

Residues 1-105 (MGIKNLATLI…YELDKRKVRR (105 aa)) form an N-domain region. Asp34 is a Mg(2+) binding site. Residues Arg47 and Arg71 each contribute to the DNA site. Residues Asp87, Glu156, Glu158, Asp177, and Asp179 each coordinate Mg(2+). Residues 120–251 (EIIKHERRLV…VNALKLIKEH (132 aa)) form an I-domain region. Glu156 serves as a coordination point for DNA. Positions 229 and 231 each coordinate DNA. Asp231 serves as a coordination point for Mg(2+). Residues 339–347 (VQKRLDSFF) form an interaction with PCNA region. A disordered region spans residues 360–381 (AAKKAKDAKKKAAAKGKIAKRR). Residues 365 to 381 (KDAKKKAAAKGKIAKRR) show a composition bias toward basic residues.

Belongs to the XPG/RAD2 endonuclease family. FEN1 subfamily. As to quaternary structure, interacts with PCNA. Three molecules of FEN1 bind to one PCNA trimer with each molecule binding to one PCNA monomer. PCNA stimulates the nuclease activity without altering cleavage specificity. Requires Mg(2+) as cofactor. Phosphorylated. Phosphorylation upon DNA damage induces relocalization to the nuclear plasma.

The protein resides in the nucleus. It is found in the nucleolus. Its subcellular location is the nucleoplasm. The protein localises to the mitochondrion. Structure-specific nuclease with 5'-flap endonuclease and 5'-3' exonuclease activities involved in DNA replication and repair. During DNA replication, cleaves the 5'-overhanging flap structure that is generated by displacement synthesis when DNA polymerase encounters the 5'-end of a downstream Okazaki fragment. It enters the flap from the 5'-end and then tracks to cleave the flap base, leaving a nick for ligation. Also involved in the long patch base excision repair (LP-BER) pathway, by cleaving within the apurinic/apyrimidinic (AP) site-terminated flap. Acts as a genome stabilization factor that prevents flaps from equilibrating into structures that lead to duplications and deletions. Also possesses 5'-3' exonuclease activity on nicked or gapped double-stranded DNA, and exhibits RNase H activity. Also involved in replication and repair of rDNA and in repairing mitochondrial DNA. This chain is Flap endonuclease 1, found in Kluyveromyces lactis (strain ATCC 8585 / CBS 2359 / DSM 70799 / NBRC 1267 / NRRL Y-1140 / WM37) (Yeast).